The sequence spans 107 residues: Heme-degrading monooxygenase (107 aa).

The region spanning isoleucine 2–tyrosine 94 is the ABM domain. Asparagine 6 serves as a coordination point for Fe cation. Histidine 76 contacts heme.

This sequence belongs to the antibiotic biosynthesis monooxygenase family. Heme-degrading monooxygenase IsdG subfamily. In terms of assembly, homodimer.

It is found in the cytoplasm. The catalysed reaction is heme b + 3 reduced [NADPH--hemoprotein reductase] + 3 O2 = biliverdin IXalpha + CO + Fe(2+) + 3 oxidized [NADPH--hemoprotein reductase] + 3 H2O + H(+). Functionally, allows bacterial pathogens to use the host heme as an iron source. Catalyzes the oxidative degradation of the heme macrocyclic porphyrin ring to the biliverdin in the presence of a suitable electron donor such as ascorbate or NADPH--cytochrome P450 reductase, with subsequent release of free iron. The chain is Heme-degrading monooxygenase from Bacillus cereus (strain ATCC 14579 / DSM 31 / CCUG 7414 / JCM 2152 / NBRC 15305 / NCIMB 9373 / NCTC 2599 / NRRL B-3711).